Reading from the N-terminus, the 264-residue chain is Anamorsin homolog 2 (264 aa).

The segment at methionine 1–phenylalanine 142 is N-terminal SAM-like domain. Positions proline 143 to leucine 174 are linker. [2Fe-2S] cluster contacts are provided by cysteine 185, cysteine 194, cysteine 197, and cysteine 199. Positions cysteine 185–cysteine 199 are fe-S binding site A. [4Fe-4S] cluster-binding residues include cysteine 225, cysteine 228, cysteine 236, and cysteine 239. Short sequence motifs (cx2C motif) lie at residues cysteine 225 to cysteine 228 and cysteine 236 to cysteine 239. Positions cysteine 225–cysteine 239 are fe-S binding site B.

This sequence belongs to the anamorsin family. Monomer. It depends on [2Fe-2S] cluster as a cofactor. [4Fe-4S] cluster serves as cofactor.

The protein resides in the cytoplasm. The protein localises to the mitochondrion intermembrane space. Component of the cytosolic iron-sulfur (Fe-S) protein assembly (CIA) machinery. Required for the maturation of extramitochondrial Fe-S proteins. Part of an electron transfer chain functioning in an early step of cytosolic Fe-S biogenesis, facilitating the de novo assembly of a [4Fe-4S] cluster on the cytosolic Fe-S scaffold complex. Electrons are transferred from NADPH via a FAD- and FMN-containing diflavin oxidoreductase. Together with the diflavin oxidoreductase, also required for the assembly of the diferric tyrosyl radical cofactor of ribonucleotide reductase (RNR), probably by providing electrons for reduction during radical cofactor maturation in the catalytic small subunit. This is Anamorsin homolog 2 from Oryza sativa subsp. japonica (Rice).